A 163-amino-acid polypeptide reads, in one-letter code: Lipoprotein signal peptidase (163 aa).

The next 3 membrane-spanning stretches (helical) occupy residues 4 to 24 (SAAL…LLIL), 66 to 86 (LDAW…AWLW), and 92 to 112 (DHQF…GNII). Residues Asp122 and Asp140 contribute to the active site. Residues 132-152 (SFAVFNLADSLITIGAGFILL) form a helical membrane-spanning segment.

Belongs to the peptidase A8 family.

It localises to the cell inner membrane. The catalysed reaction is Release of signal peptides from bacterial membrane prolipoproteins. Hydrolyzes -Xaa-Yaa-Zaa-|-(S,diacylglyceryl)Cys-, in which Xaa is hydrophobic (preferably Leu), and Yaa (Ala or Ser) and Zaa (Gly or Ala) have small, neutral side chains.. The protein operates within protein modification; lipoprotein biosynthesis (signal peptide cleavage). In terms of biological role, this protein specifically catalyzes the removal of signal peptides from prolipoproteins. This Allorhizobium ampelinum (strain ATCC BAA-846 / DSM 112012 / S4) (Agrobacterium vitis (strain S4)) protein is Lipoprotein signal peptidase.